Consider the following 193-residue polypeptide: Potassium-transporting ATPase KdpC subunit (193 aa).

A helical membrane pass occupies residues 14-34; it reads ITFTFLVLCGLVYPLIVTGIA.

The protein belongs to the KdpC family. The system is composed of three essential subunits: KdpA, KdpB and KdpC.

Its subcellular location is the cell membrane. Functionally, part of the high-affinity ATP-driven potassium transport (or Kdp) system, which catalyzes the hydrolysis of ATP coupled with the electrogenic transport of potassium into the cytoplasm. This subunit acts as a catalytic chaperone that increases the ATP-binding affinity of the ATP-hydrolyzing subunit KdpB by the formation of a transient KdpB/KdpC/ATP ternary complex. This Bacillus cereus (strain B4264) protein is Potassium-transporting ATPase KdpC subunit.